The primary structure comprises 1135 residues: Receptor-type guanylate cyclase gcy-4 (1135 aa).

An N-terminal signal peptide occupies residues 1–20; sequence MTQLLRFLLILSIFCDFSHS. At 21–483 the chain is on the extracellular side; it reads QRPTIRVGIA…CPIPFFDQYR (463 aa). N-linked (GlcNAc...) asparagine glycans are attached at residues Asn-37, Asn-193, Asn-209, Asn-251, Asn-349, Asn-375, Asn-431, Asn-436, and Asn-447. The chain crosses the membrane as a helical span at residues 484 to 504; that stretch reads LLIFVFVIVAGLLILAIFTCL. Residues 505–1135 are Cytoplasmic-facing; the sequence is TSMVRNQRAE…VMRREMMRVS (631 aa). The tract at residues 535-560 is disordered; it reads KGRRLSTDSENSTVTKSSKGSSSKNF. Residues 545-837 form the Protein kinase domain; the sequence is NSTVTKSSKG…KDNLMDHVFS (293 aa). Positions 546–560 are enriched in low complexity; the sequence is STVTKSSKGSSSKNF. Residues 895–1025 enclose the Guanylate cyclase domain; sequence TVFFSDLVKF…DTVNTASRME (131 aa).

The protein belongs to the adenylyl cyclase class-4/guanylyl cyclase family. As to expression, expressed bilaterally in ASE neurons.

The protein resides in the cell membrane. The catalysed reaction is GTP = 3',5'-cyclic GMP + diphosphate. Guanylate cyclase involved in the production of the second messenger cGMP. Regulates chemotaxis responses toward salt ions in ASE sensory neurons. In Caenorhabditis briggsae, this protein is Receptor-type guanylate cyclase gcy-4.